The following is a 502-amino-acid chain: Probable cytosol aminopeptidase (502 aa).

The Mn(2+) site is built by Lys269 and Asp274. Lys281 is a catalytic residue. Mn(2+) contacts are provided by Asp292, Asp351, and Glu353. The active site involves Arg355.

It belongs to the peptidase M17 family. Mn(2+) is required as a cofactor.

The protein localises to the cytoplasm. It carries out the reaction Release of an N-terminal amino acid, Xaa-|-Yaa-, in which Xaa is preferably Leu, but may be other amino acids including Pro although not Arg or Lys, and Yaa may be Pro. Amino acid amides and methyl esters are also readily hydrolyzed, but rates on arylamides are exceedingly low.. It catalyses the reaction Release of an N-terminal amino acid, preferentially leucine, but not glutamic or aspartic acids.. Its function is as follows. Presumably involved in the processing and regular turnover of intracellular proteins. Catalyzes the removal of unsubstituted N-terminal amino acids from various peptides. The chain is Probable cytosol aminopeptidase from Shewanella denitrificans (strain OS217 / ATCC BAA-1090 / DSM 15013).